The primary structure comprises 451 residues: MGKYFGTDGVRGEANVELTPELAFKLGRFGGYVLSQHETERPKVFVARDTRISGEMLESALIAGLLSVGIEVYKLGVLATPGVSYLVRTEKASAGVMISASHNPALDNGIKFFGNDGFKLADDQELEIEALLDAPEDTLPRPSAEGLGTLVDYPEGLRKYEKFLVTTGTDLSGMTVALDTANGAASVSARDVFLDLNAEIAVIGEKPNGLNINDGVGSTRPEQLQELVKETGADLGLAFDGDSDRLIAVDETGEIVDGDRIMFIIGKYLSEKGLLAHNTIVTTVMSNLGFHKALDKQGINKAITAVGDRYVVEEMRSSGYNLGGEQSGHVIIMDYNTTGDGQLTAIQLAKVMKETGKSLSELAAEVTIYPQKLVNIRVENSMKERAMEVPAIANIIAKMEDEMAGNGRILVRPSGTEPLLRVMAEAPTDAEVDYYVDTIADVVRTEIGCDN.

The active-site Phosphoserine intermediate is the serine 101. Serine 101, aspartate 240, aspartate 242, and aspartate 244 together coordinate Mg(2+). Phosphoserine is present on serine 101.

The protein belongs to the phosphohexose mutase family. Requires Mg(2+) as cofactor. In terms of processing, activated by phosphorylation.

The enzyme catalyses alpha-D-glucosamine 1-phosphate = D-glucosamine 6-phosphate. Catalyzes the conversion of glucosamine-6-phosphate to glucosamine-1-phosphate. This is Phosphoglucosamine mutase from Streptococcus pyogenes serotype M1.